We begin with the raw amino-acid sequence, 461 residues long: Probable lipid II flippase MurJ (461 aa).

12 helical membrane-spanning segments follow: residues 5–25 (ILGAGVYSDIFFVAFKLPNLF), 51–71 (FASLVGLIFCIVLFMWCLLVA), 96–116 (IVAINFWYLLLVFITTFLGAL), 123–143 (FFASAYSASLLNVCMILALLI), 156–176 (LSYGVLLGGVAQILLHFYPLV), 229–249 (IASFLDTTIASFLASGSVSYL), 258–278 (LPLALFAIAISTALFPSIAIA), 293–313 (KAWFFLVGVLLLCSIGGIMLS), 337–357 (VFSLYLLGLLPFGLTKLFSLW), 372–392 (LISLFLGLAASLSLMPLLGVL), 402–422 (GLFLFVLTIKAFGFQLFLGII), and 429–449 (LVILFLACVEILLLLAFKSWV).

It belongs to the MurJ/MviN family.

The protein resides in the cell inner membrane. Its pathway is cell wall biogenesis; peptidoglycan biosynthesis. Its function is as follows. Involved in peptidoglycan biosynthesis. Transports lipid-linked peptidoglycan precursors from the inner to the outer leaflet of the cytoplasmic membrane. The chain is Probable lipid II flippase MurJ from Helicobacter pylori (strain ATCC 700392 / 26695) (Campylobacter pylori).